Consider the following 208-residue polypeptide: CASP-like protein 2A1 (208 aa).

Residues 1–36 (MEERSGVLETSRSCKQLIGPEGSDKEFEGYIDSNLR) lie on the Cytoplasmic side of the membrane. The helical transmembrane segment at 37–57 (VVETFLRLFPIGLCVTALVIM) threads the bilayer. Residues 58–79 (LKNSQENKYGSVSYTDLGAFRY) lie on the Extracellular side of the membrane. Residues 80–100 (LVHANGICAGYSLFSAIFVAL) form a helical membrane-spanning segment. Over 101 to 107 (PRLSSVH) the chain is Cytoplasmic. Residues 108 to 128 (IAWTFFVLDQVLTYIILSAGA) form a helical membrane-spanning segment. Over 129–159 (ASAEVLYLAEKGNMATAWSSACRSFGPFCHK) the chain is Extracellular. Residues 160–180 (VTASTTITFVVVVFYVLLSLI) form a helical membrane-spanning segment. Residues 181–208 (SSYKLFSKYDAPTVSNPSMGADIVAFHG) lie on the Cytoplasmic side of the membrane.

The protein belongs to the Casparian strip membrane proteins (CASP) family. Homodimer and heterodimers.

It localises to the cell membrane. This is CASP-like protein 2A1 from Glycine max (Soybean).